The primary structure comprises 864 residues: Probable beta-glucosidase J (864 aa).

Residue Asp-233 is part of the active site. Positions 411–578 (TGEPGYTFRV…DTDAAIQQAV (168 aa)) constitute a PA14 domain. Asn-434, Asn-447, and Asn-503 each carry an N-linked (GlcNAc...) asparagine glycan.

This sequence belongs to the glycosyl hydrolase 3 family.

It localises to the secreted. It catalyses the reaction Hydrolysis of terminal, non-reducing beta-D-glucosyl residues with release of beta-D-glucose.. It participates in glycan metabolism; cellulose degradation. Beta-glucosidases are one of a number of cellulolytic enzymes involved in the degradation of cellulosic biomass. Catalyzes the last step releasing glucose from the inhibitory cellobiose. The chain is Probable beta-glucosidase J (bglJ) from Neosartorya fischeri (strain ATCC 1020 / DSM 3700 / CBS 544.65 / FGSC A1164 / JCM 1740 / NRRL 181 / WB 181) (Aspergillus fischerianus).